A 1036-amino-acid chain; its full sequence is DNA-directed RNA polymerase subunit beta (1036 aa).

The protein belongs to the RNA polymerase beta chain family. In plastids the minimal PEP RNA polymerase catalytic core is composed of four subunits: alpha, beta, beta', and beta''. When a (nuclear-encoded) sigma factor is associated with the core the holoenzyme is formed, which can initiate transcription.

The protein localises to the plastid. The protein resides in the chloroplast. The catalysed reaction is RNA(n) + a ribonucleoside 5'-triphosphate = RNA(n+1) + diphosphate. DNA-dependent RNA polymerase catalyzes the transcription of DNA into RNA using the four ribonucleoside triphosphates as substrates. This chain is DNA-directed RNA polymerase subunit beta, found in Cyanidioschyzon merolae (strain NIES-3377 / 10D) (Unicellular red alga).